We begin with the raw amino-acid sequence, 268 residues long: 3-methyl-2-oxobutanoate hydroxymethyltransferase (268 aa).

Mg(2+)-binding residues include D46 and D85. 3-methyl-2-oxobutanoate contacts are provided by residues 46-47 (DS), D85, and K114. E116 contributes to the Mg(2+) binding site. E183 (proton acceptor) is an active-site residue.

Belongs to the PanB family. In terms of assembly, homodecamer; pentamer of dimers. Mg(2+) is required as a cofactor.

The protein localises to the cytoplasm. The catalysed reaction is 3-methyl-2-oxobutanoate + (6R)-5,10-methylene-5,6,7,8-tetrahydrofolate + H2O = 2-dehydropantoate + (6S)-5,6,7,8-tetrahydrofolate. It functions in the pathway cofactor biosynthesis; coenzyme A biosynthesis. Functionally, catalyzes the reversible reaction in which hydroxymethyl group from 5,10-methylenetetrahydrofolate is transferred onto alpha-ketoisovalerate to form ketopantoate. The chain is 3-methyl-2-oxobutanoate hydroxymethyltransferase from Sulfolobus acidocaldarius (strain ATCC 33909 / DSM 639 / JCM 8929 / NBRC 15157 / NCIMB 11770).